Consider the following 1853-residue polypeptide: Cellulosomal-scaffolding protein A (1853 aa).

Positions 1–28 (MRKVISMLLVVAMLTTIFAAMIPQTVSA) are cleaved as a signal peptide. 2 consecutive Cohesin domains span residues 29-182 (ATMT…VPSD) and 183-322 (GVVV…VNVG). 2 linker (Pro/Thr-rich) regions span residues 323–363 (NATP…PANT) and 523–559 (GGSV…SDDP). Residues 323–364 (NATPTKGATPTNTATPTKSATATPTRPSVPTNTPTNTPANTP) show a composition bias toward low complexity. 2 disordered regions span residues 323-367 (NATP…PVSG) and 525-559 (SVVP…SDDP). Residues 365-523 (VSGNLKVEFY…GVLVWGKEPG (159 aa)) form the CBM3 domain. Positions 525–555 (SVVPSTQPVTTPPATTKPPATTKPPATTIPP) are enriched in low complexity. Cohesin domains follow at residues 560-704 (NAIK…NVGD), 724-866 (AVRI…VNVG), 889-1031 (AVRI…VNVG), 1054-1196 (AVRI…VNVG), 1219-1361 (AVRI…VNVG), 1384-1526 (AVRI…VNVG), and 1548-1690 (KLTL…VLVT). The Dockerin domain maps to 1785 to 1852 (IMMWVGDIVK…FGATSSDYDA (68 aa)).

Post-translationally, O-glycosylated on most but not all Thr residues of the linker units. The reducing sugar is galactopyranose.

The protein resides in the secreted. In terms of biological role, acts as a scaffolding protein in the cellulosome. It promotes binding of cellulose to the catalytic domains of the cellulolytic enzymes. The sequence is that of Cellulosomal-scaffolding protein A (cipA) from Acetivibrio thermocellus (strain ATCC 27405 / DSM 1237 / JCM 9322 / NBRC 103400 / NCIMB 10682 / NRRL B-4536 / VPI 7372) (Clostridium thermocellum).